The primary structure comprises 1050 residues: DNA ligase 4 (1050 aa).

The segment at 1-22 (MNTNRRSRSPDEEALEEDQHQY) is disordered. Residues glutamate 329, lysine 331, leucine 332, arginine 336, glutamate 398, phenylalanine 438, glutamate 498, lysine 503, lysine 520, and lysine 522 each coordinate ATP. Lysine 331 functions as the N6-AMP-lysine intermediate in the catalytic mechanism. Residue glutamate 398 participates in Mg(2+) binding. Position 498 (glutamate 498) interacts with Mg(2+). Positions 691–702 (QEQERKKMEMEN) are enriched in basic and acidic residues. The segment at 691–711 (QEQERKKMEMENRKRKPATKR) is disordered. BRCT domains lie at 742 to 840 (ASKR…KENK) and 936 to 1049 (LRSF…EYVA).

Belongs to the ATP-dependent DNA ligase family. Requires Mg(2+) as cofactor.

It is found in the nucleus. It catalyses the reaction ATP + (deoxyribonucleotide)n-3'-hydroxyl + 5'-phospho-(deoxyribonucleotide)m = (deoxyribonucleotide)n+m + AMP + diphosphate.. Its function is as follows. DNA ligase involved in DNA non-homologous end joining (NHEJ); required for double-strand break (DSB) repair. This is DNA ligase 4 (mus-53) from Neurospora crassa (strain ATCC 24698 / 74-OR23-1A / CBS 708.71 / DSM 1257 / FGSC 987).